The primary structure comprises 123 residues: MTGTGRTVTRVDLCEAVYQKVGLSRTESSAFVELVLKEITDCLEKGETVKLSSFGSFLVRQKGQRIGRNPKTGTEVPISPRRVMVFKPSAILKQRINANGTASSMSSSANAAAGDKSESASGT.

A disordered region spans residues 97–123; the sequence is NANGTASSMSSSANAAAGDKSESASGT. A compositionally biased stretch (low complexity) spans 102 to 113; sequence ASSMSSSANAAA.

The protein belongs to the bacterial histone-like protein family. Heterodimer of an alpha and a beta chain.

Functionally, this protein is one of the two subunits of integration host factor, a specific DNA-binding protein that functions in genetic recombination as well as in transcriptional and translational control. The chain is Integration host factor subunit alpha from Rhodopseudomonas palustris (strain HaA2).